Reading from the N-terminus, the 346-residue chain is Partitioning defective 6 homolog alpha (346 aa).

Residues M1–G116 are interaction with PRKCI and PRKCZ. One can recognise a PB1 domain in the interval I15–R95. The interaction with PARD3 and CDC42 stretch occupies residues R126–N253. The region spanning I133–L150 is the Pseudo-CRIB domain. The region spanning R157 to N250 is the PDZ domain. Disordered stretches follow at residues R257 to C294 and G317 to L346. The residue at position 278 (S278) is a Phosphoserine. The span at G317 to G332 shows a compositional bias: polar residues. S345 carries the phosphoserine modification.

It belongs to the PAR6 family. In terms of assembly, interacts with PALS1 and CRB3. Interacts with PARD3. Interacts with GTP-bound forms of CDC42, RHOQ/TC10 and RAC1. Interacts with the N-terminal part of PRKCI and PRKCZ. Part of a complex with PARD3, CDC42 or RAC1 and PRKCI or PRKCZ. Part of a complex with LLGL1 and PRKCI. Interacts with MAP2K5. Interacts with TGFBR1; involved in TGF-beta induced epithelial to mesenchymal transition. Interacts with ECT2 ('Thr-359' phosphorylated form) and PRKCI. Interacts with DCTN1 and PCM1. In terms of processing, phosphorylated by the TGF-beta receptor. Post-translationally, ubiquitinated by the SCF(FBXO31) complex, leading to its proteasomal degradation.

The protein resides in the cytoplasm. It is found in the cell membrane. It localises to the cell junction. The protein localises to the tight junction. Its subcellular location is the cytoskeleton. The protein resides in the microtubule organizing center. It is found in the centrosome. It localises to the centriolar satellite. Its function is as follows. Adapter protein involved in asymmetrical cell division and cell polarization processes. Probably involved in the formation of epithelial tight junctions. Association with PARD3 may prevent the interaction of PARD3 with F11R/JAM1, thereby preventing tight junction assembly. The PARD6-PARD3 complex links GTP-bound Rho small GTPases to atypical protein kinase C proteins. Regulates centrosome organization and function. Essential for the centrosomal recruitment of key proteins that control centrosomal microtubule organization. The chain is Partitioning defective 6 homolog alpha (Pard6a) from Rattus norvegicus (Rat).